The sequence spans 1128 residues: MQGAQTSEDNLGSQSQPGPCGYIYFYPLATYPLREVATLGTGYAGHRCLTVPLLCGITVEPGFSINVKALHRRPDPNCGLLRATSYHRDIYVFHNAHMVPPIFEGPGLEALCGETREVFGYDAYSALPRESSKPGDFFPEGLDPSAYLGAVAITEAFKERLYSGNLVAIPSLKQEVAVGQSASVRVPLYDKEVFPEGVPQLRQFYNSDLSRCMHEALYTGLAQALRVRRVGKLVELLEKQSLQDQAKVAKVAPLKEFPASTISHPDSGALMIVDSAACELAVSYAPAMLEASHETPASLNYDSWPLFADCEGPEARVAALHRYNASLAPHVSTQIFATNSVLYVSGVSKSTGQGKESLFNSFYMTHGLGTLQEGTWDPCRRPCFSGWGGPDVTGTNGPGNYAVEHLVYAASFSPNLLARYAYYLQFCQGQKSSLTPVPETGSYVAGAAASPMCSLCEGRAPAVCLNTLFFRLRDRFPPVMSTQRRDPYVISGASGSYNETDFLGNFLNFIDKEDDGQRPDDEPRYTYWQLNQNLLERLSRLGIDAEGKLEKEPHGPRDFVKMFKDVDAAVDAEVVQFMNSMAKNNITYKDLVKSCYHVMQYSCNPFAQPACPIFTQLFYRSLLTILQDISLPICMCYENDNPGLGQSPPEWLKGHYQTLCTNFRSLAIDKGVLTAKEAKVVHGEPTCDLPDLDAALQGRLYGRRLPVRMSKVLMLCPRNIKIKNRVVFTGENAALQNSFIKSTTRRENYIINGPYMKFLNTYHKTLFPDTKLSSLYLWHNFSRRRSVPVPSGASAEEYSDLALFVDGGSRAHEESNVIDVVPGNLVTYAKQRLNNAILKACGQTQFYISLIQGLVPRTQSVPARDYPHVLGTRAVESAAAYAEATSSLTATTVVCAATDCLSQVCKARPVVTLPVTINKYTGVNGNNQIFQAGNLGYFMGRGVDRNLLQAPGAGLRKQAGGSSMRKKFVFATPTLGLTVKRRTQAATTYEIENIRAGLEAIISQKQEEDCVFDVVCNLVDAMGEACASLTRDDAEYLLGRFSVLADSVLETLATIASSGIEWTAGAARDFLEGVWGGPGAAQDNFISVAEPVGTASQASAGLLLGGGGQGSGGRRKRRLATVLPGLEV.

The required for nuclear localization stretch occupies residues 1104 to 1128 (LGGGGQGSGGRRKRRLATVLPGLEV).

This sequence belongs to the herpesviridae major DNA-binding protein family. In terms of assembly, homooligomers. Forms double-helical filaments necessary for the formation of replication compartments within the host nucleus. Interacts with the origin-binding protein. Interacts with the helicase primase complex; this interaction stimulates primer synthesis activity of the helicase-primase complex. Interacts with the DNA polymerase. Interacts with the alkaline exonuclease; this interaction increases its nuclease processivity.

Its subcellular location is the virion tegument. The protein localises to the host nucleus. Its function is as follows. Plays several crucial roles in viral infection. Participates in the opening of the viral DNA origin to initiate replication by interacting with the origin-binding protein. May disrupt loops, hairpins and other secondary structures present on ssDNA to reduce and eliminate pausing of viral DNA polymerase at specific sites during elongation. Promotes viral DNA recombination by performing strand-transfer, characterized by the ability to transfer a DNA strand from a linear duplex to a complementary single-stranded DNA circle. Can also catalyze the renaturation of complementary single strands. Additionally, reorganizes the host cell nucleus, leading to the formation of prereplicative sites and replication compartments. This process is driven by the protein which can form double-helical filaments in the absence of DNA. The sequence is that of Major DNA-binding protein from Epstein-Barr virus (strain GD1) (HHV-4).